Consider the following 289-residue polypeptide: Diaminopimelate epimerase (289 aa).

Residues asparagine 13, glutamine 47, and asparagine 67 each coordinate substrate. The active-site Proton donor is cysteine 76. Substrate-binding positions include 77 to 78, asparagine 167, asparagine 200, and 218 to 219; these read GN and ER. The active-site Proton acceptor is the cysteine 227. Residue 228-229 participates in substrate binding; the sequence is GT.

It belongs to the diaminopimelate epimerase family. In terms of assembly, homodimer.

It localises to the cytoplasm. It carries out the reaction (2S,6S)-2,6-diaminopimelate = meso-2,6-diaminopimelate. Its pathway is amino-acid biosynthesis; L-lysine biosynthesis via DAP pathway; DL-2,6-diaminopimelate from LL-2,6-diaminopimelate: step 1/1. Functionally, catalyzes the stereoinversion of LL-2,6-diaminopimelate (L,L-DAP) to meso-diaminopimelate (meso-DAP), a precursor of L-lysine and an essential component of the bacterial peptidoglycan. The sequence is that of Diaminopimelate epimerase from Burkholderia vietnamiensis (strain G4 / LMG 22486) (Burkholderia cepacia (strain R1808)).